Reading from the N-terminus, the 1184-residue chain is Protocadherin-12 (1184 aa).

The N-terminal stretch at 1–24 (MMQLLQLLLGLLGPGGYLFLLGDC) is a signal peptide. The Extracellular segment spans residues 25–718 (QEVTTLTVKY…PGALSMSMLT (694 aa)). Cadherin domains follow at residues 28-135 (TTLT…QPRF), 136-244 (PKGE…SPAF), 245-352 (AESS…IPSI), 355-460 (TWAS…APVF), and 461-565 (EKSR…APEV). N415 carries an N-linked (GlcNAc...) asparagine glycan. N-linked (GlcNAc...) asparagine glycans are attached at residues N582, N659, and N662. Residues 600–711 (PAGTDTPPLA…LRDSARKPGA (112 aa)) enclose the Cadherin 6 domain. A helical transmembrane segment spans residues 719–739 (VICLAVLLGIFGLILALFMSI). Over 740-1184 (CRTEKKDNRA…RGSSSSSRCL (445 aa)) the chain is Cytoplasmic. 2 disordered regions span residues 854–928 (RQRN…ESGP) and 973–1023 (QFQP…DPEE). Phosphoserine is present on S859. Acidic residues predominate over residues 1012–1023 (PEQEEGPLDPEE). Phosphoserine is present on S1062. Residues 1153 to 1184 (SAASGMKVQGDPGGKTGTEGKSRGSSSSSRCL) form a disordered region. Residues 1175–1184 (RGSSSSSRCL) show a composition bias toward low complexity.

In terms of processing, cleaved by ADAM10 close to the transmembrane domain to release the Protocadherin-12, secreted form in the serum. Cleavage results in reduced cellular adhesion in a cell migration assay. In terms of tissue distribution, expressed in highly vascularized tissues including the heart and placenta, but most tissues contain a low level of expression. Prominent expression in the spleen. Present in villous and extravillous trophoblast (at protein level).

The protein resides in the cell membrane. The protein localises to the cell junction. Its subcellular location is the secreted. Functionally, cellular adhesion molecule that may play an important role in cell-cell interactions at interendothelial junctions. Acts as a regulator of cell migration, probably via increasing cell-cell adhesion. Promotes homotypic calcium-dependent aggregation and adhesion and clusters at intercellular junctions. Unable to bind to catenins, weakly associates with the cytoskeleton. This chain is Protocadherin-12, found in Homo sapiens (Human).